A 2073-amino-acid polypeptide reads, in one-letter code: Non-reducing polyketide synthase cla3 (2073 aa).

Residues 9-242 (LLFGDYTEPW…EKLNIHALQH (234 aa)) are N-terminal acylcarrier protein transacylase domain (SAT). One can recognise a Ketosynthase family 3 (KS3) domain in the interval 363-793 (SGRIAIVGMS…GGNGCLLLEE (431 aa)). Active-site for beta-ketoacyl synthase activity residues include Cys538, His673, and His712. A malonyl-CoA:ACP transacylase (MAT) domain region spans residues 898 to 1198 (TFTGQGSQYA…KIMSTLDATG (301 aa)). Ser987 functions as the For acyl/malonyl transferase activity in the catalytic mechanism. Residues 1276–1590 (STCAQYVITE…QNVILERLLG (315 aa)) are product template (PT) domain. Residues 1279–1420 (AQYVITETKT…AGLESQWEKS (142 aa)) form an N-terminal hotdog fold region. The region spanning 1279–1586 (AQYVITETKT…FHRVQNVILE (308 aa)) is the PKS/mFAS DH domain. His1311 (proton acceptor; for dehydratase activity) is an active-site residue. The interval 1439 to 1586 (QGHRIQRDIY…FHRVQNVILE (148 aa)) is C-terminal hotdog fold. Residue Asp1500 is the Proton donor; for dehydratase activity of the active site. The interval 1594–1637 (SSSVPAQASDPLRSKRSPQEARSLPGEAKTEKPGSTIATTSPVL) is disordered. In terms of domain architecture, Carrier spans 1641-1718 (KSEQGMFQAL…NLRCAFDEDV (78 aa)). Ser1678 carries the post-translational modification O-(pantetheine 4'-phosphoryl)serine. Polar residues predominate over residues 1721–1738 (EFTDSEVTSGTPNSSESV). The interval 1721–1786 (EFTDSEVTSG…GVLDDGSPQP (66 aa)) is disordered. Residues 1747-1774 (PEEHAFKEPKDDSPLARRDMDNSNDRSL) are compositionally biased toward basic and acidic residues. Residues 1805-1950 (FLIADGSGSI…MQQHLRAIFK (146 aa)) form a thioesterase (TE) domain region. The active-site For thioesterase activity is the His2058.

It participates in secondary metabolite biosynthesis. Its function is as follows. Highly reducing polyketide synthase; part of the gene cluster that mediates the biosynthesis of cladosporin, a tricyclic octaketide that acts as an antimalarial agent though inhibition of the Plasmodium falciparum lysyl-tRNA synthetase. The highly reducing polyketide synthase cla2 is responsible for biosynthesis up to the pentaketide stage, including of the tetrahydropyran (THP) ring, whereas the three subsequent ketide extensions with no reduction are catalyzed by the non-reducing polyketide synthase cla3. In Cladosporium cladosporioides, this protein is Non-reducing polyketide synthase cla3.